We begin with the raw amino-acid sequence, 629 residues long: Dapper homolog 3 (629 aa).

Position 6 is a phosphoserine (Ser6). 2 disordered regions span residues 50-76 and 105-574; these read PGMG…RRAA and GGLE…GGLV. Acidic residues predominate over residues 56–69; that stretch reads EAEDEEDADEDEDA. The stretch at 63–87 forms a coiled coil; it reads ADEDEDAAAARRAAAALEEQLEALP. Positions 105–150 are enriched in low complexity; the sequence is GGLEQESGRSSGFYEDPSSTGGPDSPPSTFCGDSGFSGSSSYGRLG. Phosphoserine is present on residues Ser165 and Ser239. An Omega-N-methylarginine modification is found at Arg258. Positions 301–311 are enriched in basic and acidic residues; the sequence is PAREPSLERVG. The segment covering 316–335 has biased composition (low complexity); it reads SPAALSRAWASSWESEAAPE. Over residues 336–348 the composition is skewed to pro residues; sequence PAAPPAAPSPPDS. Phosphoserine occurs at positions 426 and 478. The span at 525–535 shows a compositional bias: low complexity; sequence SAGRLGPLGRR. Positions 536–546 are enriched in gly residues; that stretch reads GPAGGVGGGYG. A compositionally biased stretch (low complexity) spans 547 to 568; the sequence is ESESSASEGESPAFSSASSDSD. Positions 626 to 629 match the PDZ-binding motif; sequence MTTV.

It belongs to the dapper family. Can form homodimers and heterodimers with DACT1 or DACT3. Interacts with CSNK1D, PKA catalytic subunit, PKC-type kinase, DVL1, DVL3, VANGL1, VANGL2 and CTNND1. Interacts with DVL2.

Functionally, may be involved in regulation of intracellular signaling pathways during development. Specifically thought to play a role in canonical and/or non-canonical Wnt signaling pathways through interaction with DSH (Dishevelled) family proteins. The protein is Dapper homolog 3 (DACT3) of Homo sapiens (Human).